We begin with the raw amino-acid sequence, 240 residues long: Lysoplasmalogenase TMEM86A (240 aa).

At 1–21 (MVSPVTVVKSEGPKLVPFFKA) the chain is on the cytoplasmic side. The helical transmembrane segment at 22–42 (TCVYFVLWLPSSSPSWVSALI) threads the bilayer. A topological domain (extracellular) is located at residue K43. The chain crosses the membrane as a helical span at residues 44–64 (CLPIFCLWLFLLAHGLGFLLT). Residues 65-70 (HPSATR) lie on the Cytoplasmic side of the membrane. A helical membrane pass occupies residues 71–91 (IFVGLVFSAIGDAFLIWQDQG). Position 92 (Y92) is a topological domain, extracellular. A helical membrane pass occupies residues 93–113 (FVHGMLMFAVTHMLYASAFGM). Residues 114-115 (RP) lie on the Cytoplasmic side of the membrane. The helical transmembrane segment at 116–136 (LGLRTGLLMVILSGLCYAFLY) threads the bilayer. Residues 137–138 (PN) lie on the Extracellular side of the membrane. The helical transmembrane segment at 139–159 (LTGAFTYVVGVYVAIIGFMGW) threads the bilayer. At 160–174 (RAMAGLQLVGAAWRW) the chain is on the cytoplasmic side. Residues 175 to 195 (TELAAGTGALLFIVSDLTIAL) form a helical membrane-spanning segment. The Extracellular segment spans residues 196–206 (DKFCFPVPYSR). The chain crosses the membrane as a helical span at residues 207–227 (ALIMSTYYAAQMLIALSAVES). Over 228-240 (REPVEDYRLSKAK) the chain is Cytoplasmic.

The protein belongs to the TMEM86 family.

It is found in the endoplasmic reticulum membrane. It catalyses the reaction a 1-O-(1Z-alkenyl)-sn-glycero-3-phosphocholine + H2O = a 2,3-saturated aldehyde + sn-glycerol 3-phosphocholine. The catalysed reaction is a 1-O-(1Z-alkenyl)-sn-glycero-3-phosphoethanolamine + H2O = a 2,3-saturated aldehyde + sn-glycero-3-phosphoethanolamine. Functionally, catalyzes the hydrolysis of the vinyl ether bond of choline or ethanolamine lysoplasmalogens, forming fatty aldehyde and glycerophosphocholine or glycerophosphoethanolamine, respectively and is specific for the sn-2-deacylated (lyso) form of plasmalogen. Plays an important role in lysoplasmalogen metabolism in the adipocyte tissue and macrophages. The protein is Lysoplasmalogenase TMEM86A (TMEM86A) of Bos taurus (Bovine).